The primary structure comprises 46 residues: Defensin Tk-AMP-D6 (46 aa).

Intrachain disulfides connect cysteine 3–cysteine 46, cysteine 14–cysteine 34, cysteine 20–cysteine 40, and cysteine 24–cysteine 42.

Functionally, plant defense peptide. This is Defensin Tk-AMP-D6 from Triticum kiharae (Wheat).